A 338-amino-acid chain; its full sequence is Glyceraldehyde-3-phosphate dehydrogenase, cytosolic (338 aa).

NAD(+) is bound by residues 14–15 (RI), aspartate 36, and arginine 83. Residues 154-156 (SCT), threonine 185, 214-215 (TG), and arginine 237 each bind D-glyceraldehyde 3-phosphate. Cysteine 155 acts as the Nucleophile in catalysis. Asparagine 319 is a binding site for NAD(+).

The protein belongs to the glyceraldehyde-3-phosphate dehydrogenase family. As to quaternary structure, homotetramer.

It is found in the cytoplasm. It catalyses the reaction D-glyceraldehyde 3-phosphate + phosphate + NAD(+) = (2R)-3-phospho-glyceroyl phosphate + NADH + H(+). Its pathway is carbohydrate degradation; glycolysis; pyruvate from D-glyceraldehyde 3-phosphate: step 1/5. In terms of biological role, key enzyme in glycolysis that catalyzes the first step of the pathway by converting D-glyceraldehyde 3-phosphate (G3P) into 3-phospho-D-glyceroyl phosphate. Essential for the maintenance of cellular ATP levels and carbohydrate metabolism. In Ranunculus acris (Meadow buttercup), this protein is Glyceraldehyde-3-phosphate dehydrogenase, cytosolic (GAPC).